A 218-amino-acid polypeptide reads, in one-letter code: Putative tRNA methyltransferase MG248 (218 aa).

Belongs to the TrmK family.

The protein resides in the cytoplasm. In Mycoplasma genitalium (strain ATCC 33530 / DSM 19775 / NCTC 10195 / G37) (Mycoplasmoides genitalium), this protein is Putative tRNA methyltransferase MG248.